Reading from the N-terminus, the 1179-residue chain is Pesticidal crystal protein Cry1Ad (1179 aa).

This sequence belongs to the delta endotoxin family.

In terms of biological role, promotes colloidosmotic lysis by binding to the midgut epithelial cells of many lepidopteran larvae. The protein is Pesticidal crystal protein Cry1Ad (cry1Ad) of Bacillus thuringiensis subsp. aizawai.